A 160-amino-acid polypeptide reads, in one-letter code: Transcriptional regulator MraZ (160 aa).

2 SpoVT-AbrB domains span residues 5–50 (NFET…DGGY) and 93–136 (AVEC…SQAE).

The protein belongs to the MraZ family. Forms oligomers.

Its subcellular location is the cytoplasm. It is found in the nucleoid. This is Transcriptional regulator MraZ from Geotalea daltonii (strain DSM 22248 / JCM 15807 / FRC-32) (Geobacter daltonii).